Reading from the N-terminus, the 152-residue chain is Transcriptional regulator MraZ (152 aa).

SpoVT-AbrB domains lie at 5 to 52 (AQAI…PLKE) and 81 to 124 (ATEC…SETE).

The protein belongs to the MraZ family. Forms oligomers.

Its subcellular location is the cytoplasm. The protein localises to the nucleoid. The protein is Transcriptional regulator MraZ of Mannheimia succiniciproducens (strain KCTC 0769BP / MBEL55E).